A 426-amino-acid polypeptide reads, in one-letter code: Glutamyl-tRNA reductase (426 aa).

Substrate is bound by residues 49–52 (TCNR), Ser109, 114–116 (EGQ), and Gln120. Cys50 (nucleophile) is an active-site residue. 189 to 194 (GAGETG) contacts NADP(+).

It belongs to the glutamyl-tRNA reductase family. As to quaternary structure, homodimer.

The enzyme catalyses (S)-4-amino-5-oxopentanoate + tRNA(Glu) + NADP(+) = L-glutamyl-tRNA(Glu) + NADPH + H(+). The protein operates within porphyrin-containing compound metabolism; protoporphyrin-IX biosynthesis; 5-aminolevulinate from L-glutamyl-tRNA(Glu): step 1/2. Its function is as follows. Catalyzes the NADPH-dependent reduction of glutamyl-tRNA(Glu) to glutamate 1-semialdehyde (GSA). The chain is Glutamyl-tRNA reductase (hemA) from Chlorobaculum parvum (strain DSM 263 / NCIMB 8327) (Chlorobium vibrioforme subsp. thiosulfatophilum).